A 351-amino-acid chain; its full sequence is Anaerobic nitrite reductase Glb1-2 (351 aa).

2 consecutive Globin domains span residues 13–162 (DFTE…VEMK) and 184–333 (CFTE…AEMK). Positions 56, 70, 74, 104, 108, 109, 227, 241, 245, 275, 279, and 280 each coordinate heme b. The interval 331–351 (EMKKTDHDHQTNVEDKSKPSS) is disordered.

Belongs to the plant globin family. As to quaternary structure, monomer. Heme b is required as a cofactor. As to expression, predominantly expressed in nodules and roots, and, to a lesser extent, in leaves, at low levels in pods, but barely in stems, petioles, buds and flowers. Mainly expressed in nodules and roots at low levels, and barely in leaves. In terms of tissue distribution, expressed at very low levels in nodules, roots and pods.

It is found in the cytoplasm. It localises to the nucleus. The enzyme catalyses Fe(III)-heme b-[protein] + nitric oxide + H2O = Fe(II)-heme b-[protein] + nitrite + 2 H(+). In terms of biological role, phytoglobin that regulates the fine tuning of nitric oxide (NO) concentration in the cytosol in response to sudden changes in O(2) availability, and performs both symbiotic and nonsymbiotic functions. Exhibits NO dioxygenase activity in the presence of O(2) but nitrite reductase (NiR) activity in the absence of O(2) (e.g. during flooding or in waterlogged soil). May not function as an oxygen storage or transport protein. Extremely reactive toward the physiological ligands O(2), nitric oxide (NO), and nitrite with a very high affinity for O(2) through an hexacoordinate heme iron because of a very low dissociation constant. Very high affinity for O(2) through two hexacoordinate heme irons. Extremely reactive toward the physiological ligands O(2), nitric oxide (NO), and nitrite. Its function is as follows. Very high affinity for O(2) through a single hexacoordinate heme iron. Extremely reactive toward the physiological ligands O(2), nitric oxide (NO), and nitrite. The protein is Anaerobic nitrite reductase Glb1-2 of Medicago truncatula (Barrel medic).